Here is a 279-residue protein sequence, read N- to C-terminus: Probable endonuclease 4 (279 aa).

Zn(2+)-binding residues include H67, H107, E144, D177, H180, H214, D227, H229, and E259.

The protein belongs to the AP endonuclease 2 family. It depends on Zn(2+) as a cofactor.

It carries out the reaction Endonucleolytic cleavage to 5'-phosphooligonucleotide end-products.. Its function is as follows. Endonuclease IV plays a role in DNA repair. It cleaves phosphodiester bonds at apurinic or apyrimidinic (AP) sites, generating a 3'-hydroxyl group and a 5'-terminal sugar phosphate. The chain is Probable endonuclease 4 from Sulfurihydrogenibium sp. (strain YO3AOP1).